The primary structure comprises 89 residues: UPF0335 protein Caul_0876 (89 aa).

It belongs to the UPF0335 family.

This Caulobacter sp. (strain K31) protein is UPF0335 protein Caul_0876.